Reading from the N-terminus, the 349-residue chain is tRNA pseudouridine synthase D (349 aa).

Residue F27 participates in substrate binding. D80 (nucleophile) is an active-site residue. N129 lines the substrate pocket. Residues 155–303 enclose the TRUD domain; the sequence is GVPNYFGAQR…VEAARRAMLL (149 aa). Residue F329 participates in substrate binding.

This sequence belongs to the pseudouridine synthase TruD family.

It catalyses the reaction uridine(13) in tRNA = pseudouridine(13) in tRNA. Responsible for synthesis of pseudouridine from uracil-13 in transfer RNAs. This Escherichia coli O8 (strain IAI1) protein is tRNA pseudouridine synthase D.